The chain runs to 196 residues: Peroxiredoxin TSA1 (196 aa).

The Thioredoxin domain maps to 3-161 (AQVQKQAPTF…ALRLVEAFQW (159 aa)). A Glycyl lysine isopeptide (Lys-Gly) (interchain with G-Cter in ubiquitin) cross-link involves residue K14. 45-47 (TFV) lines the substrate pocket. Residue C48 is the Cysteine sulfenic acid (-SOH) intermediate of the active site. K89 is covalently cross-linked (Glycyl lysine isopeptide (Lys-Gly) (interchain with G-Cter in ubiquitin)). R124 is a binding site for substrate. Residue K132 forms a Glycyl lysine isopeptide (Lys-Gly) (interchain with G-Cter in ubiquitin) linkage. The residue at position 174 (T174) is a Phosphothreonine.

It belongs to the peroxiredoxin family. AhpC/Prx1 subfamily. In terms of assembly, homodimer; disulfide-linked, upon oxidation. Interacts with YAP1 via transient disulfide linkages. The enzyme can be inactivated by further oxidation of the cysteine sulfenic acid (C(P)-SOH) to sulphinic acid (C(P)-SO2H) instead of its condensation to a disulfide bond. It can be reactivated by forming a transient disulfide bond with sulfiredoxin SRX1, which reduces the cysteine sulfinic acid in an ATP- and Mg-dependent manner.

The protein localises to the cytoplasm. It catalyses the reaction a hydroperoxide + [thioredoxin]-dithiol = an alcohol + [thioredoxin]-disulfide + H2O. Functionally, thiol-specific peroxidase that catalyzes the reduction of hydrogen peroxide and organic hydroperoxides to water and alcohols, respectively. Plays a role in cell protection against oxidative stress by detoxifying peroxides and as sensor of hydrogen peroxide-mediated signaling events. Protects the cell against the oxidative stress caused by nascent-protein misfolding and aggregation. Relays hydrogen peroxide as a signal to the transcription factor YAP1 by inducing the formation of intramolecular disulfide bonds in YAP1, which causes its nuclear accumulation and activation. Can act alternatively as peroxidase and molecular chaperone. Oxidative stress and heat shock exposure cause a reversible shift of the protein structure from low MW species to high MW complexes, triggering a peroxidase-to-chaperone functional switch. The chaperone function of the protein enhances resistance to heat shock. This is Peroxiredoxin TSA1 from Saccharomyces cerevisiae (strain ATCC 204508 / S288c) (Baker's yeast).